Reading from the N-terminus, the 572-residue chain is DNA polymerase (572 aa).

Positions 1–222 (MPRKMFSCDF…LPMDKEIRRA (222 aa)) are 3'-5' exonuclease and strand displacement activities. Residues 56 to 66 (YFHNLKFDGAF) are interaction with the primer terminal protein. Mg(2+)-binding residues include D142 and D166. The interval 223–226 (YRGG) is DNA-binding; Involved in the formation of a stable complex between TP and phi29 DNA polymerase. The initiation, polymerization and pyrophosphorolytic activities stretch occupies residues 227-572 (FTWLNDKYKE…VLVDSVFTIK (346 aa)). Residues D246 and V247 each contribute to the Mg(2+) site. Residues Y251, K368, and K380 each coordinate 5-methyl-UTP. D453 and D455 together coordinate Mg(2+). D455 provides a ligand contact to 5-methyl-UTP.

Belongs to the DNA polymerase type-B family. Interacts with the primer terminal protein; this interaction allows the initiation of TP-primed DNA replication at both viral DNA ends. Interacts with DNA. It depends on Mg(2+) as a cofactor.

The catalysed reaction is DNA(n) + a 2'-deoxyribonucleoside 5'-triphosphate = DNA(n+1) + diphosphate. In terms of biological role, polymerase responsible for protein-primed viral DNA replication by strand displacement with high processivity and fidelity. To start replication, the DNA polymerase forms a heterodimer with a free primer terminal protein (TP), recognizes the replication origins at both 5' ends of the linear chromosome, and initiates replication using as primer the OH-group of Ser-232 of the TP. This polymerase possesses three enzymatic activities: DNA synthesis (polymerase), primer terminal protein (TP) deoxynucleotidylation, which is the formation of a covalent linkage (phosphoester) between the hydroxyl group of a specific serine residue in TP and 5'-dAMP, a reaction directed by the second T at the 3' end, and 3' to 5' exonuclease activity. Exonuclease activity has a proofreading purpose. The chain is DNA polymerase (2) from Bacillus phage B103 (Bacteriophage B103).